A 456-amino-acid polypeptide reads, in one-letter code: Glycosyl hydrolase family 109 protein (456 aa).

Residues 1-31 constitute a signal peptide (tat-type signal); the sequence is MKLNRRHFLKTAGLSAAGILTSQLPLSSAEA. NAD(+) contacts are provided by residues 62 to 63, aspartate 84, 133 to 136, 153 to 154, and asparagine 182; these read QR, WEWH, and EV. Residues tyrosine 211, arginine 230, 242 to 245, and tyrosine 324 each bind substrate; that span reads YPTH. Residue tyrosine 242 coordinates NAD(+).

This sequence belongs to the Gfo/Idh/MocA family. Glycosyl hydrolase 109 subfamily. Requires NAD(+) as cofactor. Post-translationally, predicted to be exported by the Tat system. The position of the signal peptide cleavage has not been experimentally proven.

Functionally, glycosidase. In Shewanella pealeana (strain ATCC 700345 / ANG-SQ1), this protein is Glycosyl hydrolase family 109 protein.